Consider the following 150-residue polypeptide: D-aminoacyl-tRNA deacylase (150 aa).

A Gly-cisPro motif, important for rejection of L-amino acids motif is present at residues 136–137 (GP).

Belongs to the DTD family. As to quaternary structure, homodimer.

It localises to the cytoplasm. It catalyses the reaction glycyl-tRNA(Ala) + H2O = tRNA(Ala) + glycine + H(+). The catalysed reaction is a D-aminoacyl-tRNA + H2O = a tRNA + a D-alpha-amino acid + H(+). In terms of biological role, an aminoacyl-tRNA editing enzyme that deacylates mischarged D-aminoacyl-tRNAs. Also deacylates mischarged glycyl-tRNA(Ala), protecting cells against glycine mischarging by AlaRS. Acts via tRNA-based rather than protein-based catalysis; rejects L-amino acids rather than detecting D-amino acids in the active site. By recycling D-aminoacyl-tRNA to D-amino acids and free tRNA molecules, this enzyme counteracts the toxicity associated with the formation of D-aminoacyl-tRNA entities in vivo and helps enforce protein L-homochirality. In Macrococcus caseolyticus (strain JCSC5402) (Macrococcoides caseolyticum), this protein is D-aminoacyl-tRNA deacylase.